The chain runs to 597 residues: C4b-binding protein alpha chain (597 aa).

The first 48 residues, M1 to G48, serve as a signal peptide directing secretion. Sushi domains follow at residues N49–Y110, K111–I172, V173–K236, I237–P296, N297–A362, L363–D424, I425–A482, and L483–W540. 16 cysteine pairs are disulfide-bonded: C50–C96, C81–C108, C113–C154, C140–C170, C175–C217, C203–C234, C239–C281, C267–C294, C299–C348, C332–C360, C365–C409, C399–C422, C426–C468, C454–C480, C484–C525, and C511–C538. A glycan (N-linked (GlcNAc...) asparagine) is linked at N221. N506 and N528 each carry an N-linked (GlcNAc...) asparagine glycan.

As to quaternary structure, disulfide-linked complex of alpha and beta chains of 3 possible sorts: a 570 kDa complex of 7 alpha chains and 1 beta chain, a 530 kDa homoheptamer of alpha chains or a 500 kDa complex of 6 alpha chains and 1 beta chain. The central body of the alpha chain homomer supports tentacles, each with the binding site for C4b at the end. In terms of assembly, (Microbial infection) Interacts with Staphylococcus aureus protein SdrE; this interaction inhibits complement-mediated bacterial opsonization. In terms of tissue distribution, chylomicrons in the plasma.

It localises to the secreted. Controls the classical pathway of complement activation. It binds as a cofactor to C3b/C4b inactivator (C3bINA), which then hydrolyzes the complement fragment C4b. It also accelerates the degradation of the C4bC2a complex (C3 convertase) by dissociating the complement fragment C2a. Alpha chain binds C4b. It also interacts with anticoagulant protein S and with serum amyloid P component. This is C4b-binding protein alpha chain (C4BPA) from Homo sapiens (Human).